The following is a 246-amino-acid chain: UDP-2,3-diacylglucosamine hydrolase (246 aa).

Mn(2+) is bound by residues D8, H10, D41, N79, and H114. Substrate is bound at residue 79–80 (NR). 4 residues coordinate substrate: D122, K164, K167, and H195. 2 residues coordinate Mn(2+): H195 and H197.

Belongs to the LpxH family. The cofactor is Mn(2+).

The protein localises to the cell inner membrane. It catalyses the reaction UDP-2-N,3-O-bis[(3R)-3-hydroxytetradecanoyl]-alpha-D-glucosamine + H2O = 2-N,3-O-bis[(3R)-3-hydroxytetradecanoyl]-alpha-D-glucosaminyl 1-phosphate + UMP + 2 H(+). It participates in glycolipid biosynthesis; lipid IV(A) biosynthesis; lipid IV(A) from (3R)-3-hydroxytetradecanoyl-[acyl-carrier-protein] and UDP-N-acetyl-alpha-D-glucosamine: step 4/6. Functionally, hydrolyzes the pyrophosphate bond of UDP-2,3-diacylglucosamine to yield 2,3-diacylglucosamine 1-phosphate (lipid X) and UMP by catalyzing the attack of water at the alpha-P atom. Involved in the biosynthesis of lipid A, a phosphorylated glycolipid that anchors the lipopolysaccharide to the outer membrane of the cell. The sequence is that of UDP-2,3-diacylglucosamine hydrolase from Vibrio cholerae serotype O1 (strain ATCC 39541 / Classical Ogawa 395 / O395).